The following is a 225-amino-acid chain: Uracil-DNA glycosylase (225 aa).

Asp-65 (proton acceptor) is an active-site residue.

This sequence belongs to the uracil-DNA glycosylase (UDG) superfamily. UNG family.

The protein localises to the cytoplasm. It carries out the reaction Hydrolyzes single-stranded DNA or mismatched double-stranded DNA and polynucleotides, releasing free uracil.. Its function is as follows. Excises uracil residues from the DNA which can arise as a result of misincorporation of dUMP residues by DNA polymerase or due to deamination of cytosine. The sequence is that of Uracil-DNA glycosylase from Bacillus cereus (strain AH187).